An 895-amino-acid polypeptide reads, in one-letter code: AP-1 complex subunit gamma (895 aa).

HEAT repeat units lie at residues 130–166, 167–205, 211–256, 301–339, and 341–376; these read TAMA…LRKV, PDLT…MDST, KKMV…ILGQ, NGLK…TDIQ, and VQRH…ESNI. Disordered regions lie at residues 591–687, 706–733, and 746–770; these read KQEE…MNNM, NNNS…NNKS, and QLTP…QTSV. Composition is skewed to low complexity over residues 604 to 626, 639 to 658, 675 to 687, 706 to 731, and 746 to 765; these read PTQT…QSSQ, QSSA…GGNA, NGNM…MNNM, NNNS…NNNN, and QLTP…LSPT. Residues 775-893 form the GAE domain; that stretch reads PQPLTFLVYQ…SDVPDTPLPS (119 aa).

This sequence belongs to the adaptor complexes large subunit family. In terms of assembly, adaptor protein complex 1 (AP-1) is a heterotetramer composed of two large adaptins (gamma-type subunit and beta-type subunit), a medium adaptin (mu-type subunit) and a small adaptin (sigma-type subunit). Interacts with rhgA.

The protein localises to the golgi apparatus. It is found in the trans-Golgi network. Its subcellular location is the cytoplasmic vesicle. The protein resides in the clathrin-coated vesicle membrane. Functionally, subunit of clathrin-associated adaptor protein complex 1 that plays a role in protein sorting in the trans-Golgi network (TGN) and endosomes. The AP complexes mediate the recruitment of clathrin to membranes and the recognition of sorting signals within the cytosolic tails of transmembrane cargo molecules. Also involved in early steps of phagocytosis and macropinocytosis. The polypeptide is AP-1 complex subunit gamma (ap1g1) (Dictyostelium discoideum (Social amoeba)).